Reading from the N-terminus, the 505-residue chain is AMP phosphorylase (505 aa).

AMP-binding positions include Gly-170, 196–201 (SRAITS), and Thr-205. Asp-258 functions as the Proton donor in the catalytic mechanism. AMP contacts are provided by Ser-266 and Lys-290.

Belongs to the thymidine/pyrimidine-nucleoside phosphorylase family. Type 2 subfamily.

The catalysed reaction is AMP + phosphate = alpha-D-ribose 1,5-bisphosphate + adenine. The enzyme catalyses CMP + phosphate = cytosine + alpha-D-ribose 1,5-bisphosphate. It catalyses the reaction UMP + phosphate = alpha-D-ribose 1,5-bisphosphate + uracil. Functionally, catalyzes the conversion of AMP and phosphate to adenine and ribose 1,5-bisphosphate (R15P). Exhibits phosphorylase activity toward CMP and UMP in addition to AMP. Functions in an archaeal AMP degradation pathway, together with R15P isomerase and RubisCO. In Methanococcus maripaludis (strain C5 / ATCC BAA-1333), this protein is AMP phosphorylase.